We begin with the raw amino-acid sequence, 291 residues long: Phosphate import ATP-binding protein PstB (291 aa).

Positions 43 to 286 (ANVKDLSFWY…PKHAMTEEYI (244 aa)) constitute an ABC transporter domain. Position 75 to 82 (75 to 82 (GASGCGKS)) interacts with ATP.

The protein belongs to the ABC transporter superfamily. Phosphate importer (TC 3.A.1.7) family. The complex is composed of two ATP-binding proteins (PstB), two transmembrane proteins (PstC and PstA) and a solute-binding protein (PstS).

Its subcellular location is the cell inner membrane. The enzyme catalyses phosphate(out) + ATP + H2O = ADP + 2 phosphate(in) + H(+). In terms of biological role, part of the ABC transporter complex PstSACB involved in phosphate import. Responsible for energy coupling to the transport system. The polypeptide is Phosphate import ATP-binding protein PstB (Alcaligenes faecalis).